The following is a 386-amino-acid chain: Bifunctional enzyme IspD/IspF (386 aa).

Residues 1–230 (MIRDERVAAI…RARSILEAPV (230 aa)) form a 2-C-methyl-D-erythritol 4-phosphate cytidylyltransferase region. Positions 231-386 (AMGVGYDTHR…HAVALLVRVR (156 aa)) are 2-C-methyl-D-erythritol 2,4-cyclodiphosphate synthase. The a divalent metal cation site is built by Asp-237 and His-239. 4-CDP-2-C-methyl-D-erythritol 2-phosphate contacts are provided by residues 237-239 (DTH) and 262-263 (HS). His-270 serves as a coordination point for a divalent metal cation. 4-CDP-2-C-methyl-D-erythritol 2-phosphate contacts are provided by residues 284–286 (DLG), 289–293 (FPDTD), 360–363 (TTGE), Phe-367, and Arg-370.

In the N-terminal section; belongs to the IspD/TarI cytidylyltransferase family. IspD subfamily. This sequence in the C-terminal section; belongs to the IspF family. A divalent metal cation is required as a cofactor.

The catalysed reaction is 2-C-methyl-D-erythritol 4-phosphate + CTP + H(+) = 4-CDP-2-C-methyl-D-erythritol + diphosphate. It carries out the reaction 4-CDP-2-C-methyl-D-erythritol 2-phosphate = 2-C-methyl-D-erythritol 2,4-cyclic diphosphate + CMP. Its pathway is isoprenoid biosynthesis; isopentenyl diphosphate biosynthesis via DXP pathway; isopentenyl diphosphate from 1-deoxy-D-xylulose 5-phosphate: step 2/6. The protein operates within isoprenoid biosynthesis; isopentenyl diphosphate biosynthesis via DXP pathway; isopentenyl diphosphate from 1-deoxy-D-xylulose 5-phosphate: step 4/6. Bifunctional enzyme that catalyzes the formation of 4-diphosphocytidyl-2-C-methyl-D-erythritol from CTP and 2-C-methyl-D-erythritol 4-phosphate (MEP) (IspD), and catalyzes the conversion of 4-diphosphocytidyl-2-C-methyl-D-erythritol 2-phosphate (CDP-ME2P) to 2-C-methyl-D-erythritol 2,4-cyclodiphosphate (ME-CPP) with a corresponding release of cytidine 5-monophosphate (CMP) (IspF). The polypeptide is Bifunctional enzyme IspD/IspF (Anaeromyxobacter sp. (strain Fw109-5)).